A 368-amino-acid chain; its full sequence is tRNA/tmRNA (uracil-C(5))-methyltransferase (368 aa).

Q192, Y220, N225, E241, and D301 together coordinate S-adenosyl-L-methionine. Residue C326 is the Nucleophile of the active site. E360 acts as the Proton acceptor in catalysis.

Belongs to the class I-like SAM-binding methyltransferase superfamily. RNA M5U methyltransferase family. TrmA subfamily.

The catalysed reaction is uridine(54) in tRNA + S-adenosyl-L-methionine = 5-methyluridine(54) in tRNA + S-adenosyl-L-homocysteine + H(+). It carries out the reaction uridine(341) in tmRNA + S-adenosyl-L-methionine = 5-methyluridine(341) in tmRNA + S-adenosyl-L-homocysteine + H(+). Functionally, dual-specificity methyltransferase that catalyzes the formation of 5-methyluridine at position 54 (m5U54) in all tRNAs, and that of position 341 (m5U341) in tmRNA (transfer-mRNA). The chain is tRNA/tmRNA (uracil-C(5))-methyltransferase from Actinobacillus pleuropneumoniae serotype 3 (strain JL03).